Here is a 92-residue protein sequence, read N- to C-terminus: Probable Fe(2+)-trafficking protein (92 aa).

The protein belongs to the Fe(2+)-trafficking protein family.

Its function is as follows. Could be a mediator in iron transactions between iron acquisition and iron-requiring processes, such as synthesis and/or repair of Fe-S clusters in biosynthetic enzymes. The polypeptide is Probable Fe(2+)-trafficking protein (Shewanella sp. (strain ANA-3)).